The following is an 839-amino-acid chain: LPS-assembly protein LptD (839 aa).

A signal peptide spans 1-21 (MAIGITACVLSLINYQGLAYS).

This sequence belongs to the LptD family. As to quaternary structure, component of the lipopolysaccharide transport and assembly complex. Interacts with LptE and LptA.

It localises to the cell outer membrane. Its function is as follows. Together with LptE, is involved in the assembly of lipopolysaccharide (LPS) at the surface of the outer membrane. The chain is LPS-assembly protein LptD from Legionella pneumophila subsp. pneumophila (strain Philadelphia 1 / ATCC 33152 / DSM 7513).